The sequence spans 156 residues: Large ribosomal subunit protein uL15 (156 aa).

Positions 1–11 are enriched in basic and acidic residues; sequence MKLNDLRDKPG. Residues 1-40 are disordered; it reads MKLNDLRDKPGSVKARKRVGRGIGSGTGKTGGRGVKGQKS. Gly residues predominate over residues 21–35; it reads RGIGSGTGKTGGRGV.

This sequence belongs to the universal ribosomal protein uL15 family. In terms of assembly, part of the 50S ribosomal subunit.

In terms of biological role, binds to the 23S rRNA. This chain is Large ribosomal subunit protein uL15, found in Brucella anthropi (strain ATCC 49188 / DSM 6882 / CCUG 24695 / JCM 21032 / LMG 3331 / NBRC 15819 / NCTC 12168 / Alc 37) (Ochrobactrum anthropi).